Consider the following 2155-residue polypeptide: Polyketide synthase 2 (2155 aa).

An N-terminal acylcarrier protein transacylase domain (SAT) region spans residues 7–244; that stretch reads FIFGDQTGGF…IPIPIWAPYH (238 aa). The 434-residue stretch at 374 to 807 folds into the Ketosynthase family 3 (KS3) domain; sequence DSKIAIIGMS…GGNSALLLED (434 aa). Catalysis depends on for beta-ketoacyl synthase activity residues C546, H681, and H723. Residues 908-1213 are malonyl-CoA:ACP transacylase (MAT) domain; that stretch reads GFVFSGQGAQ…ASLHRKDDGW (306 aa). S998 functions as the For acyl/malonyl transferase activity in the catalytic mechanism. The segment at 1290 to 1605 is product template (PT) domain; that stretch reads TSSVQRIIRQ…RSLLNKVLPP (316 aa). Residues 1294–1428 are N-terminal hotdog fold; the sequence is QRIIRQTDGP…CLLRFADPTS (135 aa). In terms of domain architecture, PKS/mFAS DH spans 1294-1600; sequence QRIIRQTDGP…FLGMSRSLLN (307 aa). H1327 serves as the catalytic Proton acceptor; for dehydratase activity. The C-terminal hotdog fold stretch occupies residues 1455-1600; that stretch reads TDSLLSKGIV…FLGMSRSLLN (146 aa). Catalysis depends on D1514, which acts as the Proton donor; for dehydratase activity. The disordered stretch occupies residues 1626 to 1654; that stretch reads AASAKDTERRPLDIPTRAQRQPSSPQTGT. The segment covering 1643-1654 has biased composition (polar residues); sequence AQRQPSSPQTGT. Residues 1649–1726 enclose the Carrier 1 domain; sequence SPQTGTMGRI…ELKAFLGADQ (78 aa). S1686 carries the post-translational modification O-(pantetheine 4'-phosphoryl)serine. The disordered stretch occupies residues 1735–1765; the sequence is SSIGQHTPQTSDKGSGTLASQKTDGDTGPDT. Over residues 1736–1756 the composition is skewed to polar residues; it reads SIGQHTPQTSDKGSGTLASQK. The Carrier 2 domain maps to 1764-1838; that stretch reads DTTLNRVCAI…ALQKALCGSE (75 aa). The residue at position 1798 (S1798) is an O-(pantetheine 4'-phosphoryl)serine. The thioesterase (TE) domain stretch occupies residues 1873–2149; that stretch reads ASPPHATSIL…MVEMGNLIGD (277 aa). The For thioesterase activity role is filled by S1979.

Polyketide synthase; part of the Pks2 gene cluster that mediates the formation of infectious structures (appressoria), enabling these fungi to kill insects faster. The product of the Pks2 gene cluster is different from the one of Pks1 and has still not been identified. The protein is Polyketide synthase 2 of Metarhizium anisopliae (strain ARSEF 549).